The following is a 479-amino-acid chain: Cardiolipin synthase A (479 aa).

2 consecutive transmembrane segments (helical) span residues 8–28 (FFGY…LHAV) and 38–58 (IAWA…YLVF). PLD phosphodiesterase domains lie at 218–245 (VNFR…GDEY) and 392–419 (QPGF…DNRS). Catalysis depends on residues His-223, Lys-225, Asp-230, His-397, Lys-399, and Asp-404.

It belongs to the phospholipase D family. Cardiolipin synthase subfamily. ClsA sub-subfamily.

The protein localises to the cell inner membrane. It carries out the reaction 2 a 1,2-diacyl-sn-glycero-3-phospho-(1'-sn-glycerol) = a cardiolipin + glycerol. Its function is as follows. Catalyzes the reversible phosphatidyl group transfer from one phosphatidylglycerol molecule to another to form cardiolipin (CL) (diphosphatidylglycerol) and glycerol. The chain is Cardiolipin synthase A from Pseudomonas putida (strain GB-1).